The chain runs to 481 residues: ATP synthase subunit beta (481 aa).

160-167 (GGAGVGKT) is a binding site for ATP.

It belongs to the ATPase alpha/beta chains family. As to quaternary structure, F-type ATPases have 2 components, CF(1) - the catalytic core - and CF(0) - the membrane proton channel. CF(1) has five subunits: alpha(3), beta(3), gamma(1), delta(1), epsilon(1). CF(0) has three main subunits: a(1), b(2) and c(9-12). The alpha and beta chains form an alternating ring which encloses part of the gamma chain. CF(1) is attached to CF(0) by a central stalk formed by the gamma and epsilon chains, while a peripheral stalk is formed by the delta and b chains.

The protein resides in the cell inner membrane. It carries out the reaction ATP + H2O + 4 H(+)(in) = ADP + phosphate + 5 H(+)(out). Its function is as follows. Produces ATP from ADP in the presence of a proton gradient across the membrane. The catalytic sites are hosted primarily by the beta subunits. The chain is ATP synthase subunit beta from Myxococcus xanthus (strain DK1622).